Here is a 202-residue protein sequence, read N- to C-terminus: Small ribosomal subunit protein uS4c (202 aa).

Residues 1–13 show a composition bias toward basic residues; the sequence is MSRYRGPRMKMIR. The interval 1-41 is disordered; the sequence is MSRYRGPRMKMIRRPGTLPGLTSKTPGTKVGSSDRSTSSKK. The span at 29–41 shows a compositional bias: low complexity; the sequence is KVGSSDRSTSSKK. Positions 90–153 constitute an S4 RNA-binding domain; that stretch reads MRLDNTIFRL…KCRLVDRRDM (64 aa).

The protein belongs to the universal ribosomal protein uS4 family. As to quaternary structure, part of the 30S ribosomal subunit. Contacts protein S5. The interaction surface between S4 and S5 is involved in control of translational fidelity.

The protein localises to the plastid. Functionally, one of the primary rRNA binding proteins, it binds directly to 16S rRNA where it nucleates assembly of the body of the 30S subunit. Its function is as follows. With S5 and S12 plays an important role in translational accuracy. In Aneura mirabilis (Parasitic liverwort), this protein is Small ribosomal subunit protein uS4c (rps4).